The primary structure comprises 407 residues: Serine/threonine transporter SstT (407 aa).

Helical transmembrane passes span 14-34 (GSLVLQILVGIVAGVILATVS), 48-68 (FVGALKAIAPILVFILVAASI), 82-102 (IVILYLFGTFSAAVTAVLMSF), 141-161 (AVLTGNYIGILAWGVGLGLAL), 192-212 (IGIFGLVSATFATTGFTAIAG), 216-236 (LLLVLLAAMAIMALIINPAIV), 290-310 (IPLGATINMGGAAITITILTL), 316-336 (MGIQVDLLTAILLSVVAGVSA), and 363-383 (VAMQVVAVGFIIGVIQDSAET).

Belongs to the dicarboxylate/amino acid:cation symporter (DAACS) (TC 2.A.23) family.

Its subcellular location is the cell inner membrane. The enzyme catalyses L-serine(in) + Na(+)(in) = L-serine(out) + Na(+)(out). It catalyses the reaction L-threonine(in) + Na(+)(in) = L-threonine(out) + Na(+)(out). Functionally, involved in the import of serine and threonine into the cell, with the concomitant import of sodium (symport system). In Shewanella halifaxensis (strain HAW-EB4), this protein is Serine/threonine transporter SstT.